Consider the following 227-residue polypeptide: Enolase-phosphatase E1 (227 aa).

It belongs to the HAD-like hydrolase superfamily. MasA/MtnC family. In terms of assembly, monomer. Mg(2+) is required as a cofactor.

It carries out the reaction 5-methylsulfanyl-2,3-dioxopentyl phosphate + H2O = 1,2-dihydroxy-5-(methylsulfanyl)pent-1-en-3-one + phosphate. It functions in the pathway amino-acid biosynthesis; L-methionine biosynthesis via salvage pathway; L-methionine from S-methyl-5-thio-alpha-D-ribose 1-phosphate: step 3/6. It participates in amino-acid biosynthesis; L-methionine biosynthesis via salvage pathway; L-methionine from S-methyl-5-thio-alpha-D-ribose 1-phosphate: step 4/6. Functionally, bifunctional enzyme that catalyzes the enolization of 2,3-diketo-5-methylthiopentyl-1-phosphate (DK-MTP-1-P) into the intermediate 2-hydroxy-3-keto-5-methylthiopentenyl-1-phosphate (HK-MTPenyl-1-P), which is then dephosphorylated to form the acireductone 1,2-dihydroxy-3-keto-5-methylthiopentene (DHK-MTPene). The chain is Enolase-phosphatase E1 from Pseudomonas syringae pv. tomato (strain ATCC BAA-871 / DC3000).